Here is a 342-residue protein sequence, read N- to C-terminus: tRNA N6-adenosine threonylcarbamoyltransferase (342 aa).

2 residues coordinate Fe cation: His115 and His119. Substrate is bound by residues 137–141 (IVSGG), Asp170, Gly183, Asp187, and Asn276. Position 304 (Asp304) interacts with Fe cation.

This sequence belongs to the KAE1 / TsaD family. Fe(2+) is required as a cofactor.

The protein localises to the cytoplasm. It carries out the reaction L-threonylcarbamoyladenylate + adenosine(37) in tRNA = N(6)-L-threonylcarbamoyladenosine(37) in tRNA + AMP + H(+). Required for the formation of a threonylcarbamoyl group on adenosine at position 37 (t(6)A37) in tRNAs that read codons beginning with adenine. Is involved in the transfer of the threonylcarbamoyl moiety of threonylcarbamoyl-AMP (TC-AMP) to the N6 group of A37, together with TsaE and TsaB. TsaD likely plays a direct catalytic role in this reaction. The protein is tRNA N6-adenosine threonylcarbamoyltransferase of Staphylococcus haemolyticus (strain JCSC1435).